The primary structure comprises 576 residues: Proline--tRNA ligase (576 aa).

This sequence belongs to the class-II aminoacyl-tRNA synthetase family. ProS type 1 subfamily. In terms of assembly, homodimer.

The protein resides in the cytoplasm. The catalysed reaction is tRNA(Pro) + L-proline + ATP = L-prolyl-tRNA(Pro) + AMP + diphosphate. Catalyzes the attachment of proline to tRNA(Pro) in a two-step reaction: proline is first activated by ATP to form Pro-AMP and then transferred to the acceptor end of tRNA(Pro). As ProRS can inadvertently accommodate and process non-cognate amino acids such as alanine and cysteine, to avoid such errors it has two additional distinct editing activities against alanine. One activity is designated as 'pretransfer' editing and involves the tRNA(Pro)-independent hydrolysis of activated Ala-AMP. The other activity is designated 'posttransfer' editing and involves deacylation of mischarged Ala-tRNA(Pro). The misacylated Cys-tRNA(Pro) is not edited by ProRS. The sequence is that of Proline--tRNA ligase from Leptospira borgpetersenii serovar Hardjo-bovis (strain L550).